Consider the following 316-residue polypeptide: uncharacterized protein (316 aa).

4 consecutive transmembrane segments (helical) span residues 74 to 94 (IPVL…GMAI), 99 to 119 (WPYA…IFLG), 166 to 186 (MAGC…TVLG), and 188 to 208 (VEGF…GYIF).

Its subcellular location is the cell membrane. This is an uncharacterized protein from Synechocystis sp. (strain ATCC 27184 / PCC 6803 / Kazusa).